We begin with the raw amino-acid sequence, 93 residues long: MDGIKYAVFTEKSIRLLGNNQYTSNVESGSTRTEIKHWVELFFGVKVIAMNSHRLPGKGRRVGPIKGHTMHYRRMIITLQPGYSIPPLIEKRT.

This sequence belongs to the universal ribosomal protein uL23 family. Part of the 50S ribosomal subunit.

It is found in the plastid. Its subcellular location is the chloroplast. Functionally, binds to 23S rRNA. The protein is Large ribosomal subunit protein uL23cz/uL23cy (rpl23-A) of Acorus calamus (Sweet flag).